We begin with the raw amino-acid sequence, 660 residues long: Rhamnogalacturonate lyase B (660 aa).

The N-terminal stretch at 1 to 18 (MRLGVCFSLAAAASVARA) is a signal peptide. 4 N-linked (GlcNAc...) asparagine glycosylation sites follow: Asn25, Asn109, Asn142, and Asn284. Residues 446–466 (RLGTPDKSSGEFRHGAARDPT) form a disordered region. The span at 453 to 466 (SSGEFRHGAARDPT) shows a compositional bias: basic and acidic residues. Asn524, Asn566, and Asn635 each carry an N-linked (GlcNAc...) asparagine glycan.

This sequence belongs to the polysaccharide lyase 4 family.

Its subcellular location is the secreted. The enzyme catalyses Endotype eliminative cleavage of L-alpha-rhamnopyranosyl-(1-&gt;4)-alpha-D-galactopyranosyluronic acid bonds of rhamnogalacturonan I domains in ramified hairy regions of pectin leaving L-rhamnopyranose at the reducing end and 4-deoxy-4,5-unsaturated D-galactopyranosyluronic acid at the non-reducing end.. Functionally, pectinolytic enzymes consist of four classes of enzymes: pectin lyase, polygalacturonase, pectin methylesterase and rhamnogalacturonase. Degrades the rhamnogalacturonan I (RG-I) backbone of pectin. Active against linseed rhamnogalacturonan. In Emericella nidulans (strain FGSC A4 / ATCC 38163 / CBS 112.46 / NRRL 194 / M139) (Aspergillus nidulans), this protein is Rhamnogalacturonate lyase B (rglB).